Consider the following 319-residue polypeptide: Polyprenyl transferase macG (319 aa).

9 consecutive transmembrane segments (helical) span residues 28-45, 48-68, 106-126, 127-147, 152-172, 182-202, 224-244, 249-269, and 289-309; these read AWLC…AAGM, VSLE…SVTA, AVVA…GTLG, PAVM…PFMK, FPQV…WVGI, ALPL…FYAT, VQIL…VTAL, SLIF…WHIL, and LGLY…VYDI.

The protein belongs to the UbiA prenyltransferase family. Mg(2+) is required as a cofactor.

The protein localises to the membrane. Its pathway is secondary metabolite biosynthesis; terpenoid biosynthesis. Functionally, polyprenyl transferase; part of the gene cluster that mediates the biosynthesis of macrophorins, isoprenoid epoxycyclohexenones containing cyclized drimane moieties. The first step of the pathway is the synthesis of 6-methylsalicylic acid (6-MSA) by the polyketide synthase macA. 6-MSA is then converted to m-cresol by the decarboxylase macB. The cytochrome P450 monooxygenase macC then catalyzes the oxidation of m-cresol to toluquinol. Epoxidation of toluquinol is then performed by the short chain dehydrogenase macD, with the help of macE, and a further prenylation by macG leads to 7-deacetoxyyanuthone A. The next step is the hydroxylation of C-22 of 7-deacetoxyyanuthone A by the cytochrome P450 monooxygenase macH to yield 22-deacetylyanuthone A. O-Mevalon transferase macI then attaches mevalon to the hydroxyl group of 22-deacetylyanuthone A to produce yanuthone E. The terpene cyclase macJ catalyzes the cyclization of 22-deacetylyanuthone A to macrophorin A. MacJ is also able to catalyze cyclization of yanuthone E and 7-deacetoxyyanuthone A to their corresponding macrophorins. The macJ products can be further modified by macH and macJ, as well as by the FAD-dependent monooxygenase macF, to produce additional macrophorins, including 4'-oxomacrophorin A, 4'-oxomacrophorin D and 4'-oxomacrophorin E. This Penicillium terrestre protein is Polyprenyl transferase macG.